Reading from the N-terminus, the 334-residue chain is MRTDELDYELPQELIAQRPAEPRDASRLMVVDVPSRGISHHVFRELPRFLGPGDVLVLNETKVIPARLFASRPGGGEVELLFLGERGGAWEALARPSRRLRPGMPLSAGEGERLEVVEELGEGRWLVRGRDVPGLLERAGRMPLPPYIEPTPEAEASYQTVYARTPGSAAAPTAGFHFTGRVLRGVEEAGARIARVVLHVGLGTFAPVREERLEDHRMHREYYAVPEETARAVEEAERVVAVGTTVVRTLESWARSGVREGESELFIYPGYEWRAVDALITNFHLPRSTLLALVMSFAGRELVREAYEVAVRERYRFYSFGDAMLLLGGGRSLR.

Belongs to the QueA family. Monomer.

The protein localises to the cytoplasm. The enzyme catalyses 7-aminomethyl-7-carbaguanosine(34) in tRNA + S-adenosyl-L-methionine = epoxyqueuosine(34) in tRNA + adenine + L-methionine + 2 H(+). It participates in tRNA modification; tRNA-queuosine biosynthesis. Functionally, transfers and isomerizes the ribose moiety from AdoMet to the 7-aminomethyl group of 7-deazaguanine (preQ1-tRNA) to give epoxyqueuosine (oQ-tRNA). This chain is S-adenosylmethionine:tRNA ribosyltransferase-isomerase, found in Rubrobacter xylanophilus (strain DSM 9941 / JCM 11954 / NBRC 16129 / PRD-1).